The primary structure comprises 82 residues: Sulfur carrier protein TusA (82 aa).

Catalysis depends on Cys-19, which acts as the Cysteine persulfide intermediate.

This sequence belongs to the sulfur carrier protein TusA family.

The protein resides in the cytoplasm. Its function is as follows. Sulfur carrier protein which probably makes part of a sulfur-relay system. In Tolumonas auensis (strain DSM 9187 / NBRC 110442 / TA 4), this protein is Sulfur carrier protein TusA.